The following is a 247-amino-acid chain: Adenosylcobinamide-GDP ribazoletransferase (247 aa).

The next 6 helical transmembrane spans lie at 31-51, 57-77, 109-129, 136-156, 189-209, and 218-238; these read VVWF…AAAL, PWLG…GLHL, FGVI…HWLL, PALV…TLLL, ITPI…WMWL, and ILGA…GVSL.

This sequence belongs to the CobS family. Mg(2+) serves as cofactor.

The protein localises to the cell inner membrane. It catalyses the reaction alpha-ribazole + adenosylcob(III)inamide-GDP = adenosylcob(III)alamin + GMP + H(+). The catalysed reaction is alpha-ribazole 5'-phosphate + adenosylcob(III)inamide-GDP = adenosylcob(III)alamin 5'-phosphate + GMP + H(+). It functions in the pathway cofactor biosynthesis; adenosylcobalamin biosynthesis; adenosylcobalamin from cob(II)yrinate a,c-diamide: step 7/7. In terms of biological role, joins adenosylcobinamide-GDP and alpha-ribazole to generate adenosylcobalamin (Ado-cobalamin). Also synthesizes adenosylcobalamin 5'-phosphate from adenosylcobinamide-GDP and alpha-ribazole 5'-phosphate. The sequence is that of Adenosylcobinamide-GDP ribazoletransferase from Thiobacillus denitrificans (strain ATCC 25259 / T1).